The sequence spans 529 residues: MAGSTLRFSLLLAAAFAGRATALWPWPQYIQTSELRYTIFPQSFQFQYHLSSAAQVGCSVLDEAFQRYRDLLFGSVAFRFPHPIEKRHTSEKNSLVVLVVTPGCDQFPSLGSVENYTLTINDEQSLLLSETVWGALRGLETFSQLIWRSPEGTFYVNKTDIEDFPRFPHRGLLLDTSRHYLPLASILDTLDVMAYNKFNVFHWHLVDDSSFPYESFTFPELTKKGSYNPATHIYTAQDVKEVIEYARLRGIRVLAEFDTPGHTLSWGPGVPGLLTPCYSGSHPSGTFGPVNPALNNTYEFMSTFFLEISTVFPDFYLHLGGDEVDFTCWKSNPDIQAFMKKKGFGDDFKKLESFYIQTLLDIVSAYGKGYVVWQEVFDNKVKVRPDTIIQVWREEIPVKYVKELALVTRAGFRALLSAPWYLNHITYGPDWKEIYLVEPLAFEGSPEQKALVIGGEACMWGEYVDSTNLVPRLWPRAGAVAERLWSNKMVSNLDFAFKRLAHFRCELLRRGVQAQPLSVGYCDMEFEQT.

An N-terminal signal peptide occupies residues 1-22; that stretch reads MAGSTLRFSLLLAAAFAGRATA. The propeptide occupies 23 to 88; that stretch reads LWPWPQYIQT…RFPHPIEKRH (66 aa). Cys58 and Cys104 are joined by a disulfide. Residues Asn115, Asn157, and Asn295 are each glycosylated (N-linked (GlcNAc...) asparagine). A disulfide bridge connects residues Cys277 and Cys328. Catalysis depends on Glu323, which acts as the Proton donor. A critical for hydrolysis GM2 gangliosides region spans residues 423–424; sequence NH. A disulfide bridge links Cys505 with Cys522.

It belongs to the glycosyl hydrolase 20 family. In terms of assembly, there are 3 beta-hexosaminidase isozymes: isozyme A (hexosaminidase A) is a heterodimer composed of one subunit alpha and one subunit beta (chain A and B); isozyme B (hexosaminidase B) is a homodimer of two beta subunits (two chains A and B); isozyme S (hexosaminidase S) is a homodimer of two alpha subunits. The composition of the dimer (isozyme A versus isozyme S) has a significant effect on the substrate specificity of the alpha subunit active site.

Its subcellular location is the lysosome. It catalyses the reaction Hydrolysis of terminal non-reducing N-acetyl-D-hexosamine residues in N-acetyl-beta-D-hexosaminides.. It carries out the reaction N-acetyl-beta-D-galactosaminyl-(1-&gt;4)-beta-D-3-sulfogalactosyl-(1-&gt;4)-beta-D-glucosyl-(1&lt;-&gt;1')-ceramide + H2O = a beta-D-3-sulfogalactosyl-(1-&gt;4)-beta-D-glucosyl-(1&lt;-&gt;1')-ceramide + N-acetyl-beta-D-galactosamine. The enzyme catalyses a ganglioside GM2 (d18:1(4E)) + H2O = a ganglioside GM3 (d18:1(4E)) + N-acetyl-beta-D-galactosamine. The catalysed reaction is a ganglioside GM2 + H2O = a ganglioside GM3 + N-acetyl-beta-D-galactosamine. It catalyses the reaction beta-D-GalNAc-(1-&gt;4)-alpha-L-IdoA-(1-&gt;3)-beta-D-GalNAc-4-sulfate-(1-&gt;4)-alpha-L-IdoA-(1-&gt;3)-D-GalNAc-4-sulfate + H2O = alpha-L-IdoA-(1-&gt;3)-beta-D-GalNAc-4-sulfate-(1-&gt;4)-alpha-L-IdoA-(1-&gt;3)-D-GalNAc-4-sulfate + N-acetyl-D-galactosamine. It carries out the reaction N-acetyl-beta-D-6-sulfogalactosaminyl-(1-&gt;4)-alpha-L-iduronyl-(1-&gt;3)-N-acetyl-D-6-sulfogalactosamine + H2O = alpha-L-iduronyl-(1-&gt;3)-N-acetyl-D-6-sulfogalactosamine + N-acetyl-D-6-sulfogalactosamine. Addition of GM2A stimulates the hydrolysis of sulfated glycosphingolipid SM2 and the ganglioside GM2. Its function is as follows. Hydrolyzes the non-reducing end N-acetyl-D-hexosamine and/or sulfated N-acetyl-D-hexosamine of glycoconjugates, such as the oligosaccharide moieties from proteins and neutral glycolipids, or from certain mucopolysaccharides. The isozyme S is as active as the isozyme A on the anionic bis-sulfated glycans, the chondroitin-6-sulfate trisaccharide (C6S-3), and the dermatan sulfate pentasaccharide, and the sulfated glycosphingolipid SM2. The isozyme B does not hydrolyze each of these substrates, however hydrolyzes efficiently neutral oligosaccharide. Only the isozyme A is responsible for the degradation of GM2 gangliosides in the presence of GM2A. The polypeptide is Beta-hexosaminidase subunit alpha (Bos taurus (Bovine)).